Reading from the N-terminus, the 366-residue chain is MIEYETKVKIDELKENFEDLKDVFNIDKVEEEVKKLDKEMMEPNFWNDQNRAKKISKMAQNLKDEIDEFKKLENDFEELEIAVELSEDDPSMTAQVEAILKVIEKKIGSFRLRMLLSEEYDDANAFLSLHPGAGGTESQDWASMLLRMYTRWADKNNYDIETIDFQEGDEAGIKSATIKISGPYAYGKLKYESGVHRLVRISPFDANGRRHTSFASISVMPEFDENVEIEINPDDLKIDTYRSGGAGGQHVNKTDSAVRITHLPTGIVVAVQNERSQHQNKATALKILKAKLYELEHQKKLEEKLRLRGEVKDISWGNQIRSYVLYPYTLVKDLRTEYETSNAQAVLDGEIDEFIEEELLFFAKYK.

The residue at position 249 (glutamine 249) is an N5-methylglutamine.

It belongs to the prokaryotic/mitochondrial release factor family. Post-translationally, methylated by PrmC. Methylation increases the termination efficiency of RF2.

The protein localises to the cytoplasm. Its function is as follows. Peptide chain release factor 2 directs the termination of translation in response to the peptide chain termination codons UGA and UAA. This Petrotoga mobilis (strain DSM 10674 / SJ95) protein is Peptide chain release factor 2.